A 287-amino-acid polypeptide reads, in one-letter code: 2-dehydro-3-deoxyphosphooctonate aldolase (287 aa).

It belongs to the KdsA family.

The protein localises to the cytoplasm. It carries out the reaction D-arabinose 5-phosphate + phosphoenolpyruvate + H2O = 3-deoxy-alpha-D-manno-2-octulosonate-8-phosphate + phosphate. It participates in carbohydrate biosynthesis; 3-deoxy-D-manno-octulosonate biosynthesis; 3-deoxy-D-manno-octulosonate from D-ribulose 5-phosphate: step 2/3. The protein operates within bacterial outer membrane biogenesis; lipopolysaccharide biosynthesis. The sequence is that of 2-dehydro-3-deoxyphosphooctonate aldolase from Leptospira interrogans serogroup Icterohaemorrhagiae serovar copenhageni (strain Fiocruz L1-130).